We begin with the raw amino-acid sequence, 398 residues long: MSSTDPLLRRVENYRESCDNCAKSKVRCGKEQPWCQRCERRGQVCSYSPSQRSRKRTLDAAHPESDQRNGTPPFTAISSASSVAAVSTGFSSMLSQADSWGTCPDLVELLTSGSSSESLTPDNNHLVWLSDMESIAGDSNISKSMERMDVFPYPKSIASSAAGVVNGSGAGADSMGRRSTCPLQNKQHCEADLISALAKPELPSLSCWGNPKASQNLGTILTASRATLKCVTTAMSCTCTPNDNVALLATAVLLRILSWYHIVLKNCNGPNDTSAATIDDHTSPTPSNDGKDTERSVSRDTNVSQDGSEPSSLIMPPMTIGAYELDSENRERMIGHIMLSELGKMGNLLSDFSKKFCDPQSTMLGNDNRSQLFLALEMLIRNKHMATVLDVRKKLEVK.

A DNA-binding region (zn(2)-C6 fungal-type) is located at residues 18–45; sequence CDNCAKSKVRCGKEQPWCQRCERRGQVC. Disordered stretches follow at residues 52-73 and 275-314; these read RSRKRTLDAAHPESDQRNGTPP and AATIDDHTSPTPSNDGKDTERSVSRDTNVSQDGSEPSSLI. Composition is skewed to basic and acidic residues over residues 56-67 and 289-298; these read RTLDAAHPESDQ and DGKDTERSVS. Polar residues predominate over residues 299–311; that stretch reads RDTNVSQDGSEPS.

It localises to the nucleus. In terms of biological role, transcription factor that specifically regulates the expression of the gene cluster that mediates the biosynthesis of aurofusarin, a red mycelium pigment which is acting as a mycotoxin. This chain is Aurofusarin biosynthesis regulatory protein aurR1, found in Gibberella zeae (strain ATCC MYA-4620 / CBS 123657 / FGSC 9075 / NRRL 31084 / PH-1) (Wheat head blight fungus).